We begin with the raw amino-acid sequence, 306 residues long: Ribosomal RNA small subunit methyltransferase H (306 aa).

Residues 33–35, D51, F82, D96, and Q103 contribute to the S-adenosyl-L-methionine site; that span reads GGY.

This sequence belongs to the methyltransferase superfamily. RsmH family.

The protein localises to the cytoplasm. The catalysed reaction is cytidine(1402) in 16S rRNA + S-adenosyl-L-methionine = N(4)-methylcytidine(1402) in 16S rRNA + S-adenosyl-L-homocysteine + H(+). Specifically methylates the N4 position of cytidine in position 1402 (C1402) of 16S rRNA. In Rickettsia akari (strain Hartford), this protein is Ribosomal RNA small subunit methyltransferase H.